Consider the following 481-residue polypeptide: Squalene epoxidase erg1 (481 aa).

A helical transmembrane segment spans residues 28–48 (HADVVIIGAGVLGCALAVALG). FAD is bound by residues 38–39 (VL), 58–59 (EA), Arg66, and Arg138. Asn146 carries an N-linked (GlcNAc...) asparagine glycan. The FAD site is built by Asp319 and Met332. A run of 2 helical transmembrane segments spans residues 425–445 (KPSVLFVHFFSVALLSLWVLL) and 452–472 (LFPVALFKCIMTFWTACVVIF).

The protein belongs to the squalene monooxygenase family. The cofactor is FAD.

It is found in the endoplasmic reticulum membrane. The protein localises to the microsome membrane. It catalyses the reaction squalene + reduced [NADPH--hemoprotein reductase] + O2 = (S)-2,3-epoxysqualene + oxidized [NADPH--hemoprotein reductase] + H2O + H(+). It participates in steroid metabolism; ergosterol biosynthesis. Its function is as follows. Squalene epoxidase; part of the third module of ergosterol biosynthesis pathway that includes the late steps of the pathway. Erg1 catalyzes the epoxidation of squalene into 2,3-epoxysqualene. The third module or late pathway involves the ergosterol synthesis itself through consecutive reactions that mainly occur in the endoplasmic reticulum (ER) membrane. Firstly, the squalene synthase erg9 catalyzes the condensation of 2 farnesyl pyrophosphate moieties to form squalene, which is the precursor of all steroids. Squalene synthase is crucial for balancing the incorporation of farnesyl diphosphate (FPP) into sterol and nonsterol isoprene synthesis. Secondly, squalene is converted into lanosterol by the consecutive action of the squalene epoxidase erg1 and the lanosterol synthase erg7. Then, the delta(24)-sterol C-methyltransferase erg6 methylates lanosterol at C-24 to produce eburicol. Eburicol is the substrate of the sterol 14-alpha demethylase encoded by cyp51A and cyp51B, to yield 4,4,24-trimethyl ergosta-8,14,24(28)-trienol. The C-14 reductase erg24 then reduces the C14=C15 double bond which leads to 4,4-dimethylfecosterol. A sequence of further demethylations at C-4, involving the C-4 demethylation complex containing the C-4 methylsterol oxidases erg25A or erg25B, the sterol-4-alpha-carboxylate 3-dehydrogenase erg26 and the 3-keto-steroid reductase erg27, leads to the production of fecosterol via 4-methylfecosterol. The C-8 sterol isomerase erg2 then catalyzes the reaction which results in unsaturation at C-7 in the B ring of sterols and thus converts fecosterol to episterol. The sterol-C5-desaturase erg3B then catalyzes the introduction of a C-5 double bond in the B ring to produce 5-dehydroepisterol. The 2 other sterol-C5-desaturases, erg3A and erg3C, seem to be less important in ergosterol biosynthesis. The C-22 sterol desaturase erg5 further converts 5-dehydroepisterol into ergosta-5,7,22,24(28)-tetraen-3beta-ol by forming the C-22(23) double bond in the sterol side chain. Finally, ergosta-5,7,22,24(28)-tetraen-3beta-ol is substrate of the C-24(28) sterol reductases erg4A and erg4B to produce ergosterol. Possible alternative sterol biosynthetic pathways might exist from fecosterol to ergosterol, depending on the activities of the erg3 isoforms. The sequence is that of Squalene epoxidase erg1 from Aspergillus fumigatus (strain ATCC MYA-4609 / CBS 101355 / FGSC A1100 / Af293) (Neosartorya fumigata).